The primary structure comprises 402 residues: Iripin-8 (402 aa).

The first 16 residues, 1-16 (MTRLLWLFAAITASLA), serve as a signal peptide directing secretion. 2 N-linked (GlcNAc...) asparagine glycosylation sites follow: N164 and N230.

Belongs to the serpin family. In terms of assembly, interacts with host thrombin/F2. Interacts with host coagulation factor VII/F7 (activated). Interacts with host coagulation factor X/F10 (activated). Interacts with host coagulation factor XII/F12 (activated). Interacts with host coagulation factor IX/F9 (activated). Interacts with host plasmin/PLG. Interacts with host protein C/PROC (activated). Saliva (at protein level). Salivary gland. Midgut. Low-level expression in ovary.

The protein resides in the secreted. Serine protease inhibitor that modulates blood feeding of ticks on vertebrate species. Inhibits the intrinsic and common pathways of blood coagulation in the host. Inhibits host thrombin, factor VIIa, factor Xa, factor XIa, factor XIIa, plasmin and activated protein C. Inhibits host trypsin and kallikrein. Reduces host complement activity. Does not affect proliferation of CD4+ T-cells and neutrophil migration. This chain is Iripin-8, found in Ixodes ricinus (Common tick).